The chain runs to 685 residues: Sodium-dependent phosphate transporter 1-B (685 aa).

6 helical membrane-spanning segments follow: residues Ile21–Phe41, Ala66–Ser86, Leu106–Phe126, Ile162–Phe182, Ala207–Phe227, and Gly234–Val254. The disordered stretch occupies residues Glu489–Asp511. A compositionally biased stretch (basic and acidic residues) spans Val496–Asp511. 4 helical membrane-spanning segments follow: residues Val517 to Gly537, Ala565 to Trp585, Phe606 to Ile626, and Ile656 to Ala676.

The protein belongs to the inorganic phosphate transporter (PiT) (TC 2.A.20) family.

It is found in the membrane. Its function is as follows. Sodium-phosphate symporter which plays a fundamental housekeeping role in phosphate transport. The polypeptide is Sodium-dependent phosphate transporter 1-B (slc20a1-b) (Xenopus laevis (African clawed frog)).